Here is a 176-residue protein sequence, read N- to C-terminus: Ribosome maturation factor RimM (176 aa).

The region spanning D93–L168 is the PRC barrel domain.

This sequence belongs to the RimM family. Binds ribosomal protein uS19.

It is found in the cytoplasm. Functionally, an accessory protein needed during the final step in the assembly of 30S ribosomal subunit, possibly for assembly of the head region. Essential for efficient processing of 16S rRNA. May be needed both before and after RbfA during the maturation of 16S rRNA. It has affinity for free ribosomal 30S subunits but not for 70S ribosomes. This Oleidesulfovibrio alaskensis (strain ATCC BAA-1058 / DSM 17464 / G20) (Desulfovibrio alaskensis) protein is Ribosome maturation factor RimM.